The chain runs to 633 residues: Phosphomethylpyrimidine synthase (633 aa).

Substrate is bound by residues N245, M274, Y303, H339, 359-361, 400-403, and E439; these read SRG and DGLR. H443 is a binding site for Zn(2+). Position 466 (Y466) interacts with substrate. H507 is a binding site for Zn(2+). [4Fe-4S] cluster is bound by residues C587, C590, and C595.

It belongs to the ThiC family. As to quaternary structure, homodimer. The cofactor is [4Fe-4S] cluster.

The catalysed reaction is 5-amino-1-(5-phospho-beta-D-ribosyl)imidazole + S-adenosyl-L-methionine = 4-amino-2-methyl-5-(phosphooxymethyl)pyrimidine + CO + 5'-deoxyadenosine + formate + L-methionine + 3 H(+). It functions in the pathway cofactor biosynthesis; thiamine diphosphate biosynthesis. Its function is as follows. Catalyzes the synthesis of the hydroxymethylpyrimidine phosphate (HMP-P) moiety of thiamine from aminoimidazole ribotide (AIR) in a radical S-adenosyl-L-methionine (SAM)-dependent reaction. The protein is Phosphomethylpyrimidine synthase of Neisseria meningitidis serogroup A / serotype 4A (strain DSM 15465 / Z2491).